Consider the following 388-residue polypeptide: NADH-quinone oxidoreductase subunit D 2 (388 aa).

This sequence belongs to the complex I 49 kDa subunit family. NDH-1 is composed of 14 different subunits. Subunits NuoB, C, D, E, F, and G constitute the peripheral sector of the complex.

The protein resides in the cell inner membrane. The catalysed reaction is a quinone + NADH + 5 H(+)(in) = a quinol + NAD(+) + 4 H(+)(out). NDH-1 shuttles electrons from NADH, via FMN and iron-sulfur (Fe-S) centers, to quinones in the respiratory chain. The immediate electron acceptor for the enzyme in this species is believed to be ubiquinone. Couples the redox reaction to proton translocation (for every two electrons transferred, four hydrogen ions are translocated across the cytoplasmic membrane), and thus conserves the redox energy in a proton gradient. This chain is NADH-quinone oxidoreductase subunit D 2, found in Sorangium cellulosum (strain So ce56) (Polyangium cellulosum (strain So ce56)).